The sequence spans 106 residues: uncharacterized protein (106 aa).

This sequence belongs to the csb family.

This is an uncharacterized protein from Dictyostelium discoideum (Social amoeba).